The following is a 117-amino-acid chain: Ribosome-binding factor A (117 aa).

It belongs to the RbfA family. Monomer. Binds 30S ribosomal subunits, but not 50S ribosomal subunits or 70S ribosomes.

The protein localises to the cytoplasm. One of several proteins that assist in the late maturation steps of the functional core of the 30S ribosomal subunit. Associates with free 30S ribosomal subunits (but not with 30S subunits that are part of 70S ribosomes or polysomes). Required for efficient processing of 16S rRNA. May interact with the 5'-terminal helix region of 16S rRNA. This Lactiplantibacillus plantarum (strain ATCC BAA-793 / NCIMB 8826 / WCFS1) (Lactobacillus plantarum) protein is Ribosome-binding factor A.